A 217-amino-acid polypeptide reads, in one-letter code: Heart- and neural crest derivatives-expressed protein 2 (217 aa).

Residues 76–116 form a disordered region; it reads DHSHYGGVPPGAGPPGLGGPRPVKRRGTANRKERRRTQSIN. Gly residues predominate over residues 83–94; that stretch reads VPPGAGPPGLGG. Residues 97-112 are compositionally biased toward basic residues; sequence PVKRRGTANRKERRRT. The region spanning 99-151 is the bHLH domain; the sequence is KRRGTANRKERRRTQSINSAFAELRECIPNVPADTKLSKIKTLRLATSYIAYL.

In terms of assembly, efficient DNA binding requires dimerization with another bHLH protein. Forms homodimers and heterodimers with TCF3 gene products E12 and E47, HAND1 and HEY1, HEY2 and HEYL (hairy-related transcription factors).

The protein localises to the nucleus. Functionally, essential for cardiac morphogenesis, particularly for the formation of the right ventricle and of the aortic arch arteries. Required for vascular development and regulation of angiogenesis, possibly through a VEGF signaling pathway. Also plays an important role in limb development, particularly in the establishment of anterior-posterior polarization, acting as an upstream regulator of sonic hedgehog (SHH) induction in the limb bud. Is involved in the development of branchial arches, which give rise to unique structures in the head and neck. Binds DNA on E-box consensus sequence 5'-CANNTG-3'. In Rattus norvegicus (Rat), this protein is Heart- and neural crest derivatives-expressed protein 2 (Hand2).